Consider the following 93-residue polypeptide: Putative transmembrane protein ORF25 (93 aa).

Helical transmembrane passes span M1 to A21, F22 to I42, and L60 to L80.

The protein resides in the host membrane. This His1 virus (isolate Australia/Victoria) (His1V) protein is Putative transmembrane protein ORF25.